We begin with the raw amino-acid sequence, 1671 residues long: MEEKRIADYFVVAGMPENPQLLQENSFNDSGRLRAATTIEPITDIGVYFPLLGEEVPEGYEILSHTPTGLQANLNHGSVRTTDCYIYFRRGKDRPPLVDIGVLYDGHERIMSDAEIVAETPGGRVANVNNSSAKTFLTYRRARADMPCNELVVTELCVIVQSKGERAPHAFCLIYKTLNKGYVGSDVYLCYKKSMYRPKHISYKPEILLRYPTFDHTDFPLNLCPSVPLFCLPMGASLEAWPHVNGTEKRKPISPVFSTFVLTVSDGTYKVYGSALTFYEDYDESKLSAEQKELLGWDEEFGAQHSLHMIKAICLLSHHPFGDTFDKWLKYLHRMVLYDVNIPIPVERYITQLLDEVPFPAPSIHLQLSSESNDRILLTQPEDSPLPRSGAGFHILLQNLGTDNCLHVLLLALTEQKILIHSLRPATLTAVAEAIVSLLFPFKWQCPYIPLCPLGLAEVLHAPLPYLIGVDSRFFDLYEPPTDVTCIDLDTNNISLCESQRHLSPKLLPKRAARLLRQTLTELENAKPISYDSTNSLDRDIRKRKRELVLEQRIQEAFLLFMASILRGYRDFLVPISKAPSVGATDPSALFQLKAFLRSRDKSHQKFFELMMKTQMFIRFIEERSFVSDGDHGLSFFDECAEKVGNYDETPAQLHLVDWDTGQNSERTKYIFPPDSVTPAGSQPGGGGGGLAYNYENFTLQPELLQSTKKTALSKFLQLQLNASLSPGSPIARRTKHEIKLSQKMASRCQQHPEAWSKYLLATCYSLYFLILPSMVLDPRHAGKEPEILRAAYDVLVRASRLKITCDEFCYRIMMQLCGIHNLPVLAVRLHYLMKRSGVQANALTYGFYNRCVLESQWPQDSTTISQIRWNRIKNVVLGAAQFRKAGKQRAASKVNKSLSASQDQNLSTLETVDGQSRTSLASSSGDGGGHGLLDFAAFDRLRNKLGSIVRQTVTGGNNETMGDAVNNTGLLIPGELSAPNTPTYGGDTEILAKALQQQQPRKQIMSIGGGDDDDEDEDEDEYTAGSPSTPQKQLEAGADDLEYAGGGDYEADEEDEDEVDEHVAAQRARQRVQSPTKISPRTPVTQNDPLGALNEEESAASATPTQETQQEQQHSQSQIDSSIYSDKPILFRGQRSATFDESTQIGKSMHRSETMPVASSGVTNSLANIGSSLKFTFGRYSPARLSLKKDLKLPANIIENISSISPSLTGKKSNELIQGSLSSIKSAANSLTKKFDEIKGVISANSTPTKTNNGHHPHGLHHGHHHPHHHHHHHSQHGNAEQEEHDAAVHEEGKLRRVSSDLDPWGRLSESRKSSYNNLVPLGENSSTGALHMHAFPAVPDNLYSLTSENAADRDCDVLIQLTTCSQCHNCSVLVYDEEIMSGWTAEDSNLNTTCHACNKLTVPFLSVQIERQVEESEQSDPLQDGKEQIANGNSHKTSLTVPYLNPLVLRKELENILTQEGDIALIKPEFVDEHPIIYWNLLWLMERIESKTHLPELCLPVPSDKEHIDPLSKVKTVHIQCLWDNLSLHTEASGPPMYLLYRETQPTSPLIKALLTDQAQLNKNVIQQIISAIRCNDFATPLKRLANERHKLKSNGVERSHSFYRDILFLALTAIGRSNVDLATFHREYAAVFDKLTERECNMYYRNQDLPPSASTIFCRAYFRPLLLP.

In terms of domain architecture, MABP spans 39-195 (IEPITDIGVY…DVYLCYKKSM (157 aa)). The 178-residue stretch at 187–364 (VYLCYKKSMY…DEVPFPAPSI (178 aa)) folds into the uDENN domain. Positions 385-521 (PLPRSGAGFH…AARLLRQTLT (137 aa)) constitute a cDENN domain. Residues 523–632 (LENAKPISYD…ERSFVSDGDH (110 aa)) form the dDENN domain. 3 disordered regions span residues 997 to 1160 (QQQQ…PVAS), 1245 to 1311 (ANST…RLSE), and 1415 to 1435 (VEESEQSDPLQDGKEQIANGN). Acidic residues-rich tracts occupy residues 1011–1023 (GDDDDEDEDEDEY) and 1050–1061 (YEADEEDEDEVD). Residues 1072–1089 (RVQSPTKISPRTPVTQND) show a composition bias toward polar residues. The segment covering 1100–1119 (AASATPTQETQQEQQHSQSQ) has biased composition (low complexity). Positions 1136–1147 (RSATFDESTQIG) are enriched in polar residues. Residues 1254 to 1277 (NGHHPHGLHHGHHHPHHHHHHHSQ) are compositionally biased toward basic residues. Residues 1281–1301 (AEQEEHDAAVHEEGKLRRVSS) show a composition bias toward basic and acidic residues.

In terms of assembly, interacts with Cam. Interacts with Rab10. Interacts (via the DENN domains) with Rab11. As to expression, expressed in the adult head and body.

Its subcellular location is the cytoplasm. It is found in the cell cortex. The protein resides in the early endosome. It localises to the recycling endosome. The protein localises to the cytoplasmic granule. Functionally, calmodulin-binding protein that acts as a guanine exchange factor for Rab10 and Rab11. Essential for maintenance of adult photoreceptor cells. Upon light stimulation, required for trafficking of newly synthesized ninaE (Rh1) from the trans-Golgi network to rhabdomere membranes via Rab11-dependent vesicular transport. During egg development, essential for establishing and maintaining epithelial cell polarity by regulating the correct polarized deposition of basal membrane (BM) proteins in follicular epithelial (FE) cells. Functions by targeting Rab10 to the basal cytoplasm, where it restricts the secretion of BM proteins such as trol/Pcan and vkg/Coll IV to the basal surface. Appears to be involved in regulating the levels and distribution of the guanine nucleotide exchange factor strat, however the two proteins appear to have independent roles in regulating polarized BM protein secretion in the FE. This chain is DENN domain-containing protein Crag, found in Drosophila melanogaster (Fruit fly).